We begin with the raw amino-acid sequence, 212 residues long: Protein-L-isoaspartate O-methyltransferase 1 (212 aa).

Residue serine 60 is part of the active site.

This sequence belongs to the methyltransferase superfamily. L-isoaspartyl/D-aspartyl protein methyltransferase family.

The protein resides in the cytoplasm. The enzyme catalyses [protein]-L-isoaspartate + S-adenosyl-L-methionine = [protein]-L-isoaspartate alpha-methyl ester + S-adenosyl-L-homocysteine. Catalyzes the methyl esterification of L-isoaspartyl residues in peptides and proteins that result from spontaneous decomposition of normal L-aspartyl and L-asparaginyl residues. It plays a role in the repair and/or degradation of damaged proteins. The polypeptide is Protein-L-isoaspartate O-methyltransferase 1 (Anaeromyxobacter sp. (strain Fw109-5)).